The following is a 1076-amino-acid chain: MSSQSHPDGLSGRDQPVELLNPARVNHMPSTVDVATALPLQVAPTAVPMDLRLDHQFSLPLEPALREQQLQQELLALKQKQQIQRQILIAEFQRQHEQLSRQHEAQLHEHIKQQQEMLAMKHQQELLEHQRKLERHRQEQELEKQHREQKLQQLKNKEKGKESAVASTEVKMKLQEFVLNKKKALAHRNLNHCISSDPRYWYGKTQHSSLDQSSPPQSGVSASYNHPVLGMYDAKDDFPLRKTASEPNLKLRSRLKQKVAERRSSPLLRRKDGPVATALKKRPLDVTDSACSSAPGSGPSSPNSSSGNVSTENGIAPTVPSAPAETSLAHRLVTREGSVAPLPLYTSPSLPNITLGLPATGPAAGAAGQQDAERLALPALQQRILFPGTHLTPYLSTSPLERDGAAAHNPLLQHMVLLEQPPTQTPLVTGLGALPLHSQSLVGADRVSPSIHKLRQHRPLGRTQSAPLPQNAQALQHLVIQQQHQQFLEKHKQQFQQQQLHLSKIISKPSEPPRQPESHPEETEEELREHQALLDEPYLDRLPGQKEPSLAGVQVKQEPIESEEEEAEATRETEPGQRPATEQELLFRQQALLLEQQRIHQLRNYQASMEAAGIPVSFGSHRPLSRAQSSPASATFPMSVQEPPTKPRFTTGLVYDTLMLKHQCTCGNTNSHPEHAGRIQSIWSRLQETGLRGKCECIRGRKATLEELQTVHSEAHTLLYGTNPLNRQKLDSSLTSVFVRLPCGGVGVDSDTIWNEVHSSGAARLAVGCVVELVFKVATGELKNGFAVVRPPGHHAEESTPMGFCYFNSVAVAAKLLQQRLNVSKILIVDWDVHHGNGTQQAFYNDPNVLYMSLHRYDDGNFFPGSGAPDEVGTGPGVGFNVNMAFTGGLEPPMGDAEYLAAFRTVVMPIANEFAPDVVLVSSGFDAVEGHPTPLGGYNLSAKCFGYLTKQLMGLAGGRLVLALEGGHDLTAICDASEACVSALLGNELEPLPEKVLHQRPNANAVHSMEKVMDIHSKYWRCLQRLSSTVGHSLIEAQKCEKEEAETVTAMASLSVGVKPAEKRSEEEPMEEEPPL.

A coiled-coil region spans residues 66–169 (REQQLQQELL…GKESAVASTE (104 aa)). Residues 117–312 (MLAMKHQQEL…NSSSGNVSTE (196 aa)) form an interaction with MEF2A region. The segment covering 132–162 (KLERHRQEQELEKQHREQKLQQLKNKEKGKE) has biased composition (basic and acidic residues). 3 disordered regions span residues 132–166 (KLER…SAVA), 205–225 (TQHS…ASYN), and 239–323 (PLRK…PSAP). Positions 205–224 (TQHSSLDQSSPPQSGVSASY) are enriched in polar residues. A Phosphoserine modification is found at serine 209. The residue at position 245 (serine 245) is a Phosphoserine; by CaMK4 and SIK1. Over residues 258-273 (KVAERRSSPLLRRKDG) the composition is skewed to basic and acidic residues. Residues 289–310 (SACSSAPGSGPSSPNSSSGNVS) show a composition bias toward low complexity. Residues 348 to 353 (PSLPNI) carry the PxLPxI/L motif; mediates interaction with ANKRA2 and 14-3-3 proteins motif. At serine 349 the chain carries Phosphoserine. Position 465 is a phosphoserine; by CaMK4 and SIK1 (serine 465). Disordered stretches follow at residues 506 to 529 (ISKP…ELRE), 541 to 580 (RLPG…QRPA), and 622 to 645 (RPLS…EPPT). The span at 514–529 (RQPESHPEETEEELRE) shows a compositional bias: basic and acidic residues. Lysine 556 is covalently cross-linked (Glycyl lysine isopeptide (Lys-Gly) (interchain with G-Cter in SUMO)). Serine 562 carries the phosphoserine modification. Over residues 626 to 638 (RAQSSPASATFPM) the composition is skewed to polar residues. Residue serine 629 is modified to Phosphoserine; by CaMK4. Position 630 is a phosphoserine (serine 630). A histone deacetylase region spans residues 652–1076 (GLVYDTLMLK…EEPMEEEPPL (425 aa)). Zn(2+)-binding residues include cysteine 664, cysteine 666, histidine 672, and cysteine 743. The active site involves histidine 795. Positions 1043 to 1076 (EEAETVTAMASLSVGVKPAEKRSEEEPMEEEPPL) match the Nuclear export signal motif.

It belongs to the histone deacetylase family. HD type 2 subfamily. As to quaternary structure, homodimer. Homodimerization via its N-terminal domain. Interacts with HDAC7. Interacts with MEF2A, MEF2C, MEF2D, MORC2 and NR2C1. Interacts with a 14-3-3 chaperone proteins in a phosphorylation dependent manner. Interacts with 14-3-3 protein YWHAB. Interacts with BTBD14B. Interacts with KDM5B. Interacts (via PxLPxI/L motif) with ANKRA2 (via ankyrin repeats). Interacts with CUL7 (as part of the 3M complex); negatively regulated by ANKRA2. Interacts with EP300 in the presence of TFAP2C. Interacts with AHRR. Interacts with MYOCD. Interacts with HSPA1A and HSPA1B leading to their deacetylation at 'Lys-77'. Interacts with ZBTB7B; the interaction allows the recruitment of HDAC4 on CD8 loci for deacetylation and possible inhibition of CD8 genes expression. Interacts with DHX36. Interacts with SIK3; this interaction leads to HDAC4 retention in the cytoplasm. Interacts with ZNF638. Post-translationally, phosphorylated by CaMK4 at Ser-245, Ser-465 and Ser-629. Phosphorylation at other residues by CaMK2D is required for the interaction with 14-3-3. Phosphorylation at Ser-349, within the PxLPxI/L motif, impairs the binding of ANKRA2 but generates a high-affinity docking site for 14-3-3. In terms of processing, sumoylation on Lys-556 is promoted by the E3 SUMO-protein ligase RANBP2, and prevented by phosphorylation by CaMK4.

The protein localises to the nucleus. The protein resides in the cytoplasm. The enzyme catalyses N(6)-acetyl-L-lysyl-[histone] + H2O = L-lysyl-[histone] + acetate. In terms of biological role, responsible for the deacetylation of lysine residues on the N-terminal part of the core histones (H2A, H2B, H3 and H4). Histone deacetylation gives a tag for epigenetic repression and plays an important role in transcriptional regulation, cell cycle progression and developmental events. Histone deacetylases act via the formation of large multiprotein complexes. Involved in muscle maturation via its interaction with the myocyte enhancer factors such as MEF2A, MEF2C and MEF2D. Deacetylates HSPA1A and HSPA1A at 'Lys-77' leading to their preferential binding to co-chaperone STUB1. In Mus musculus (Mouse), this protein is Histone deacetylase 4 (Hdac4).